The primary structure comprises 697 residues: Glycine--tRNA ligase beta subunit (697 aa).

It belongs to the class-II aminoacyl-tRNA synthetase family. Tetramer of two alpha and two beta subunits.

It localises to the cytoplasm. It catalyses the reaction tRNA(Gly) + glycine + ATP = glycyl-tRNA(Gly) + AMP + diphosphate. In Cereibacter sphaeroides (strain ATCC 17029 / ATH 2.4.9) (Rhodobacter sphaeroides), this protein is Glycine--tRNA ligase beta subunit.